The sequence spans 588 residues: Mitochondrial tRNA methylthiotransferase CDK5RAP1 (588 aa).

A mitochondrion-targeting transit peptide spans 1 to 30; that stretch reads MHPLRCVLQVQRLSAPFTSMCWVLLRTCRA. 2 disordered regions span residues 33-53 and 70-91; these read SVSS…QKDF and ASVP…YLSG. One can recognise an MTTase N-terminal domain in the interval 99–219; sequence RKVYLETYGC…LPRLLAVVES (121 aa). [4Fe-4S] cluster is bound by residues Cys108, Cys144, Cys182, Cys257, Cys261, and Cys264. Residues 243-498 enclose the Radical SAM core domain; sequence SPSATSAFVS…TVFREEASKA (256 aa). A TRAM domain is found at 500–575; it reads KTSVGCSQLV…SQTLKGHILC (76 aa).

It belongs to the methylthiotransferase family. MiaB subfamily. Interacts with CDK5R1 (p35 form). CDK5RAP1, CDK5RAP2 and CDK5RAP3 show competitive binding to CDK5R1. Probably forms a complex with CDK5R1 and CDK5. The cofactor is [4Fe-4S] cluster. As to expression, expressed in brain, liver, skeletal muscle and heart.

The protein localises to the mitochondrion. It catalyses the reaction N(6)-dimethylallyladenosine(37) in tRNA + (sulfur carrier)-SH + AH2 + 2 S-adenosyl-L-methionine = 2-methylsulfanyl-N(6)-dimethylallyladenosine(37) in tRNA + (sulfur carrier)-H + 5'-deoxyadenosine + L-methionine + A + S-adenosyl-L-homocysteine + 2 H(+). Its function is as follows. Methylthiotransferase that catalyzes the conversion of N6-(dimethylallyl)adenosine (i(6)A) to 2-methylthio-N6-(dimethylallyl)adenosine (ms(2)i(6)A) at position 37 (adjacent to the 3'-end of the anticodon) of four mitochondrial DNA-encoded tRNAs (Ser(UCN), Phe, Tyr and Trp). Essential for efficient and highly accurate protein translation by the ribosome. Specifically inhibits CDK5 activation by CDK5R1. Essential for efficient mitochondrial protein synthesis and respiratory chain. This is Mitochondrial tRNA methylthiotransferase CDK5RAP1 from Mus musculus (Mouse).